The following is a 71-amino-acid chain: MRTRIKEFRAKFNMTQEELAKRVGVRRETIVFLEKGKYNPSLKLAYKIARVFNAKIEDIFIFDEEELWEKR.

Residues 5 to 59 (IKEFRAKFNMTQEELAKRVGVRRETIVFLEKGKYNPSLKLAYKIARVFNAKIEDI) form the HTH cro/C1-type domain. Residues 16–35 (QEELAKRVGVRRETIVFLEK) constitute a DNA-binding region (H-T-H motif).

This is an uncharacterized protein from Archaeoglobus fulgidus (strain ATCC 49558 / DSM 4304 / JCM 9628 / NBRC 100126 / VC-16).